Here is a 594-residue protein sequence, read N- to C-terminus: Probable ABC transporter-binding protein DR_1571 (594 aa).

The first 18 residues, 1-18, serve as a signal peptide directing secretion; the sequence is MKKVMMLALALGASTSLA.

Belongs to the bacterial solute-binding protein 5 family.

In terms of biological role, probably part of a binding-protein-dependent transport system. The polypeptide is Probable ABC transporter-binding protein DR_1571 (Deinococcus radiodurans (strain ATCC 13939 / DSM 20539 / JCM 16871 / CCUG 27074 / LMG 4051 / NBRC 15346 / NCIMB 9279 / VKM B-1422 / R1)).